The chain runs to 700 residues: Peroxisomal acyl-coenzyme A oxidase 3 (700 aa).

The residue at position 2 (alanine 2) is an N-acetylalanine. A Phosphothreonine modification is found at threonine 281. A Microbody targeting signal motif is present at residues 698 to 700 (SKL).

The protein belongs to the acyl-CoA oxidase family. The cofactor is FAD.

The protein resides in the peroxisome. The enzyme catalyses a 2,3-saturated acyl-CoA + O2 = a (2E)-enoyl-CoA + H2O2. The catalysed reaction is (2S)-pristanoyl-CoA + O2 = (2E)-pristenoyl-CoA + H2O2. It carries out the reaction tetracosanoyl-CoA + O2 = (2E)-tetracosenoyl-CoA + H2O2. It catalyses the reaction hexadecanoyl-CoA + O2 = (2E)-hexadecenoyl-CoA + H2O2. The enzyme catalyses hexadecanedioyl-CoA + O2 = (2E)-hexadecenedioyl-CoA + H2O2. It functions in the pathway lipid metabolism; peroxisomal fatty acid beta-oxidation. Functionally, oxidizes the CoA-esters of 2-methyl-branched fatty acids. This chain is Peroxisomal acyl-coenzyme A oxidase 3 (ACOX3), found in Homo sapiens (Human).